The chain runs to 465 residues: Cysteine--tRNA ligase (465 aa).

Cys27 is a Zn(2+) binding site. Positions 29-39 (PTVYNFFHIGN) match the 'HIGH' region motif. Zn(2+) is bound by residues Cys207, His232, and Glu236. The short motif at 264 to 268 (KMSKS) is the 'KMSKS' region element. Lys267 contributes to the ATP binding site.

Belongs to the class-I aminoacyl-tRNA synthetase family. In terms of assembly, monomer. Zn(2+) serves as cofactor.

It localises to the cytoplasm. The catalysed reaction is tRNA(Cys) + L-cysteine + ATP = L-cysteinyl-tRNA(Cys) + AMP + diphosphate. The polypeptide is Cysteine--tRNA ligase (Clostridium botulinum (strain ATCC 19397 / Type A)).